The following is a 429-amino-acid chain: Na(+)/H(+) antiporter NhaA 1 (429 aa).

12 helical membrane-spanning segments follow: residues 32-52, 73-93, 111-131, 140-160, 170-190, 193-213, 219-239, 243-263, 284-304, 316-336, 349-369, and 383-403; these read ISGGLLLAATVLALGWANSPW, LSVQQWAADGLLAIFFFVAGL, VVPVAAAAGGVAVPAVLYSLL, GWAIPTATDIAFALSVLAVVG, FLLTLAVVDDLLAIVIIAVAY, ELSVVPLVAAVVPLAAFTLLV, AWWLLLPLAVLTWALVHASGV, VAGVLLAFAVPVLRSEGAGGP, VAVPVFAFCSAGVTVGGLGGL, VVVGLVVGKAIGIFTTTWLVA, WVDVAGLALLGGVGFTVSLLI, and HVKVGVLTASVTAALLATVVL.

Belongs to the NhaA Na(+)/H(+) (TC 2.A.33) antiporter family.

It is found in the cell membrane. The enzyme catalyses Na(+)(in) + 2 H(+)(out) = Na(+)(out) + 2 H(+)(in). Its function is as follows. Na(+)/H(+) antiporter that extrudes sodium in exchange for external protons. The chain is Na(+)/H(+) antiporter NhaA 1 from Frankia alni (strain DSM 45986 / CECT 9034 / ACN14a).